Here is a 907-residue protein sequence, read N- to C-terminus: Aldehyde oxidoreductase (907 aa).

Residues 2–79 enclose the 2Fe-2S ferredoxin-type domain; that stretch reads IQKVITVNGI…GAQITTIEGV (78 aa). The [2Fe-2S] cluster site is built by cysteine 40, cysteine 45, cysteine 48, cysteine 60, cysteine 100, cysteine 103, cysteine 137, and cysteine 139. 2 residues coordinate Mo-molybdopterin cytosine dinucleotide: histidine 653 and glutamate 869.

It belongs to the xanthine dehydrogenase family. In terms of assembly, homodimer. Mo-molybdopterin cytosine dinucleotide is required as a cofactor. Requires [2Fe-2S] cluster as cofactor.

The enzyme catalyses an aldehyde + A + H2O = a carboxylate + AH2 + H(+). In Megalodesulfovibrio gigas (Desulfovibrio gigas), this protein is Aldehyde oxidoreductase (mop).